The chain runs to 136 residues: Histone H3, embryonic (136 aa).

Residues 1 to 43 (MARTKQTARKSTGGKAPRKQLATKAARKSAPATGGVKKPHRYR) form a disordered region. N6-methylated lysine is present on Lys5. Lys10 bears the N6-acetyllysine; alternate mark. At Lys10 the chain carries N6-methylated lysine; alternate. Residue Ser11 is modified to Phosphoserine. Lys15 and Lys24 each carry N6-acetyllysine. Residues Lys28, Lys37, and Lys80 each carry the N6-methylated lysine modification.

Belongs to the histone H3 family. The nucleosome is a histone octamer containing two molecules each of H2A, H2B, H3 and H4 assembled in one H3-H4 heterotetramer and two H2A-H2B heterodimers. The octamer wraps approximately 147 bp of DNA. Acetylation is generally linked to gene activation. Post-translationally, methylation at Lys-5 is linked to gene activation. Methylation at Lys-10 is linked to gene repression.

Its subcellular location is the nucleus. It is found in the chromosome. In terms of biological role, core component of nucleosome. Nucleosomes wrap and compact DNA into chromatin, limiting DNA accessibility to the cellular machineries which require DNA as a template. Histones thereby play a central role in transcription regulation, DNA repair, DNA replication and chromosomal stability. DNA accessibility is regulated via a complex set of post-translational modifications of histones, also called histone code, and nucleosome remodeling. The protein is Histone H3, embryonic of Strongylocentrotus purpuratus (Purple sea urchin).